The chain runs to 1116 residues: Eukaryotic translation initiation factor 2-alpha kinase 3 (1116 aa).

The first 29 residues, 1–29 (MERAISPGLLVRALLLLLLLLGLAARTVA), serve as a signal peptide directing secretion. Residues 30–514 (AGRARGLPAP…HYNKNIRKKD (485 aa)) are Lumenal-facing. Residues 77-101 (ALPAAAGEQEPRGPEPDDETELRPR) are disordered. Residue N258 is glycosylated (N-linked (GlcNAc...) asparagine). A helical transmembrane segment spans residues 515 to 535 (PVLLLHWWKEIVATILFCIIA). The Cytoplasmic portion of the chain corresponds to 536–1116 (TTFIVRRLFH…NNSHSPLPSN (581 aa)). Residues 550 to 571 (RQRKESETQCQTENKYDSVSGE) form a disordered region. One can recognise a Protein kinase domain in the interval 593–1077 (FEPIQCLGRG…AINIIENAVF (485 aa)). 599–607 (LGRGGFGVV) lines the ATP pocket. Position 619 is a phosphotyrosine; by autocatalysis (Y619). K622 is an ATP binding site. Positions 647–888 (EHPGIVRYFN…SPKVYLYIQM (242 aa)) are insert loop. S715 bears the Phosphoserine mark. T802 carries the post-translational modification Phosphothreonine. Residues 841 to 863 (KPTSSKSSSEATLSISPPRPTTL) form a disordered region. The segment covering 844–856 (SSKSSSEATLSIS) has biased composition (low complexity). D937 acts as the Proton acceptor in catalysis. At T982 the chain carries Phosphothreonine. The disordered stretch occupies residues 1090 to 1116 (QRSRSLSSSGTKHSRQSNNSHSPLPSN). S1094 carries the post-translational modification Phosphoserine. Residues 1105–1116 (QSNNSHSPLPSN) show a composition bias toward polar residues.

This sequence belongs to the protein kinase superfamily. Ser/Thr protein kinase family. GCN2 subfamily. As to quaternary structure, forms dimers with HSPA5/BIP in resting cells. Homotetramerizes in response to endoplasmic reticulum (ER) stress, leading to its activation. Interacts with HSP90B1/GRP94. Interacts with DNAJC3; inhibiting EIF2AK3/PERK activity. Interacts with ATAD3A; ATAD3A and EIF2S1/eIF-2-alpha occupy a common binding site within the cytoplasmic loop of EIF2AK3/PERK, leading to prevent EIF2AK3/PERK association with its substrate EIF2S1/eIF-2-alpha. Interacts with MFN2. Interacts with TMEM33. Interacts with PDIA6. Interacts with LACC1. Oligomerization of the N-terminal ER luminal domain by ER stress promotes EIF2AK3/PERK trans-autophosphorylation of the C-terminal cytoplasmic kinase domain at multiple residues including Thr-982 on the kinase activation loop. Autophosphorylated at Tyr-619 following endoplasmic reticulum stress, leading to activate its activity. Dephosphorylated at Tyr-619 by PTPN1/PTP1B, leading to inactivate its enzyme activity. Phosphorylation at Thr-802 by AKT (AKT1, AKT2 and/or AKT3) inactivates EIF2AK3/PERK. Post-translationally, ADP-ribosylated by PARP16 upon ER stress, which increases kinase activity. Ubiquitous. A high level expression is seen in secretory tissues.

The protein localises to the endoplasmic reticulum membrane. The enzyme catalyses L-seryl-[protein] + ATP = O-phospho-L-seryl-[protein] + ADP + H(+). It carries out the reaction L-threonyl-[protein] + ATP = O-phospho-L-threonyl-[protein] + ADP + H(+). The catalysed reaction is L-tyrosyl-[protein] + ATP = O-phospho-L-tyrosyl-[protein] + ADP + H(+). Its activity is regulated as follows. Inhibited by HSPA5/BIP in absence of stress. Perturbation in protein folding in the endoplasmic reticulum (ER) promotes reversible dissociation from HSPA5/BIP and oligomerization, resulting in trans-autophosphorylation and kinase activity induction. Inactivated following phosphorylation at Thr-802 by AKT (AKT1, AKT2 and/or AKT3). Inhibited by ATAD3A at mitochondria-endoplasmic reticulum contact sites, providing a safe haven for mitochondrial protein translation during ER stress. Metabolic-stress sensing protein kinase that phosphorylates the alpha subunit of eukaryotic translation initiation factor 2 (EIF2S1/eIF-2-alpha) in response to various stress, such as unfolded protein response (UPR). Key effector of the integrated stress response (ISR) to unfolded proteins: EIF2AK3/PERK specifically recognizes and binds misfolded proteins, leading to its activation and EIF2S1/eIF-2-alpha phosphorylation. EIF2S1/eIF-2-alpha phosphorylation in response to stress converts EIF2S1/eIF-2-alpha in a global protein synthesis inhibitor, leading to a global attenuation of cap-dependent translation, while concomitantly initiating the preferential translation of ISR-specific mRNAs, such as the transcriptional activators ATF4 and QRICH1, and hence allowing ATF4- and QRICH1-mediated reprogramming. The EIF2AK3/PERK-mediated unfolded protein response increases mitochondrial oxidative phosphorylation by promoting ATF4-mediated expression of COX7A2L/SCAF1, thereby increasing formation of respiratory chain supercomplexes. In contrast to most subcellular compartments, mitochondria are protected from the EIF2AK3/PERK-mediated unfolded protein response due to EIF2AK3/PERK inhibition by ATAD3A at mitochondria-endoplasmic reticulum contact sites. In addition to EIF2S1/eIF-2-alpha, also phosphorylates NFE2L2/NRF2 in response to stress, promoting release of NFE2L2/NRF2 from the BCR(KEAP1) complex, leading to nuclear accumulation and activation of NFE2L2/NRF2. Serves as a critical effector of unfolded protein response (UPR)-induced G1 growth arrest due to the loss of cyclin-D1 (CCND1). Involved in control of mitochondrial morphology and function. The protein is Eukaryotic translation initiation factor 2-alpha kinase 3 of Homo sapiens (Human).